Consider the following 656-residue polypeptide: DNA mismatch repair protein MutL (656 aa).

The tract at residues aspartate 385–threonine 427 is disordered. Positions serine 387–glutamate 410 are enriched in polar residues. Residues lysine 411–threonine 427 are compositionally biased toward basic and acidic residues.

The protein belongs to the DNA mismatch repair MutL/HexB family.

In terms of biological role, this protein is involved in the repair of mismatches in DNA. It is required for dam-dependent methyl-directed DNA mismatch repair. May act as a 'molecular matchmaker', a protein that promotes the formation of a stable complex between two or more DNA-binding proteins in an ATP-dependent manner without itself being part of a final effector complex. This is DNA mismatch repair protein MutL from Lactococcus lactis subsp. cremoris (strain SK11).